The chain runs to 121 residues: Amelogenin (121 aa).

The tract at residues 1–121 (LHHQIIPVLS…DLPLEPWPAS (121 aa)) is disordered. Composition is skewed to polar residues over residues 10–19 (SQHQTPTHAL) and 47–59 (HSVT…QSNL). Residues 60–84 (PQPGQQPFQPQFPQKPTHRPIQPQA) are compositionally biased toward low complexity. Residues 85 to 121 (PVHPMPPMPQPQLPPMFPLQPLPPLLPDLPLEPWPAS) show a composition bias toward pro residues.

Belongs to the amelogenin family.

It is found in the secreted. The protein localises to the extracellular space. It localises to the extracellular matrix. Functionally, plays a role in the biomineralization of teeth. Seems to regulate the formation of crystallites during the secretory stage of tooth enamel development. Thought to play a major role in the structural organization and mineralization of developing enamel. The sequence is that of Amelogenin (AMEL) from Tachyglossus aculeatus aculeatus (Southeast Australian short-beaked echidna).